The chain runs to 503 residues: MDKKKEHPEMRIPLQTAVEVSDWPCSTSHDPHSGLGMVLGMLAVLGLSSVTLILFLWQGATSFTSHRMFPEEVPSWSWETLKGDAEQQNNSCQLILVESIPEDLPFAAGSPTAQPLAQAWLQLLDTARESVHIASYYWSLTGLDIGVNDSSSRQGEALLQKFQQLLLRNISVVVATHSPTLAKTSTDLQVLAAHGAQIRQVPMKQLTGGVLHSKFWVVDGRHIYVGSANMDWRSLTQVKELGAIIYNCSNLAQDLEKTFQTYWVLGTPQAVLPKTWPRNFSSHINRFHPLRGPFDGVPTTAYFSASPPSLCPHGRTRDLDAVLGVMEGARQFIYVSVMEYFPTTRFTHHARYWPVLDNALRAAALNKGVHVRLLVSCWFNTDPTMFAYLRSLQAFSNPSAGISVDVKVFIVPVGNHSNIPFSRVNHSKFMVTDKTAYVGTSNWSEDYFSHTAGVGLIVSQKTPRAQPGATTVQEQLRQLFERDWSSHYAMDLDRQVPSQDCVW.

Over Met1 to Gly36 the chain is Cytoplasmic. A signal-anchor for type II membrane protein transmembrane segment spans residues Met37–Trp57. The Lumenal segment spans residues Gln58 to Trp503. N-linked (GlcNAc...) asparagine glycans are attached at residues Asn89, Asn148, and Asn169. A disulfide bridge links Cys92 with Cys248. The PLD phosphodiesterase 1 domain occupies Thr207 to Ser234. Residues His212, Lys214, and Asp219 contribute to the active site. His212 acts as the Proton donor in catalysis. 4 N-linked (GlcNAc...) asparagine glycosylation sites follow: Asn247, Asn279, Asn415, and Asn425. A disulfide bond links Cys377 and Cys501. Residues Phe421 to Tyr447 form the PLD phosphodiesterase 2 domain. Active-site residues include His426, Lys428, and Asp433. His426 functions as the Nucleophile in the catalytic mechanism. N-linked (GlcNAc...) asparagine glycosylation is present at Asn442.

The protein belongs to the phospholipase D family. Post-translationally, highly N-glycosylated. In terms of tissue distribution, enriched in the white matter of early postnatal brains, as well as in splenic marginal zone cells. Highly expressed in dendritic cells (DCs) and other myeloid cells, with lower expression in B cell.

The protein resides in the endoplasmic reticulum membrane. Its subcellular location is the golgi apparatus. It localises to the trans-Golgi network membrane. It is found in the nucleus. The protein localises to the early endosome. The protein resides in the cytoplasmic vesicle. Its subcellular location is the phagosome. It localises to the lysosome. The enzyme catalyses Exonucleolytic cleavage in the 5'- to 3'-direction to yield nucleoside 3'-phosphates.. It catalyses the reaction a 5'-end 5'-dephospho-ribonucleotidyl-ribonucleotide-RNA + H2O = a ribonucleoside 3'-phosphate + a 5'-end dephospho-ribonucleoside-RNA + H(+). The catalysed reaction is a ribonucleoside 3'-phosphate-2'-3'-cyclophospho-GMP + H2O = a ribonucleoside 3'-phosphate + 2',3'-cyclophospho-GMP + H(+). It carries out the reaction a 5'-end 5'-dephospho-2'-deoxyribonucleotidyl-2'-deoxyribonucleotide in single-stranded DNA + H2O = a 5'-end dephospho-2'-deoxyribonucleoside in single-stranded DNA + a 2'-deoxyribonucleoside 3'-phosphate + H(+). The enzyme catalyses a 5'-end 5'-phospho-2'-deoxyribonucleotide in single-stranded DNA + H2O = a 5'-end 5'-dephospho-2'-deoxyribonucleotide in single-stranded DNA + phosphate. It catalyses the reaction a 3-lyso-sn-glycero-1-phospho-(3'-acyl-1'-sn-glycerol) + a 1-acyl-sn-glycerol = a 3-acyl-sn-glycero-1-phospho-(3'-acyl-1'-sn-glycerol) + glycerol. The catalysed reaction is 3-lyso-sn-glycero-1-phospho-(3'-(9Z-octadecenoyl)-1'-sn-glycerol) + 1-(9Z-octadecenoyl)-sn-glycerol = 3-(9Z-octadecenoyl)-sn-glycero-1-phospho-(3'-(9Z-octadecenoyl)-1'-sn-glycerol) + glycerol. With respect to regulation, the exonuclease activity toward ssDNA substrate is Ca(2+) and Mg(2+)-independent, but it is inhibited by Fe(2+), Cu(2+) and to a lesser extent Zn(2+) ions. 5'-&gt;3' exonuclease that hydrolyzes the phosphodiester bond of single-stranded DNA (ssDNA) and RNA molecules to form nucleoside 3'-monophosphates and 5'-end 5'-hydroxy deoxyribonucleotide/ribonucleotide fragments. Partially redundant with PLD4, can cleave all four nucleotides displaying higher efficiency for ssDNA and RNA fragments initiated with uridine and guanosine residues and lower efficiency for cytidine-initiated substrates. As a result, it does not always degrade polynucleotides to the single nucleotide level, it can stall at specific sites sparing certain fragments from exonucleolytic degradation. Processes self and pathogenic ssDNA and RNA molecules that reach the endolysosomal compartment via phagocytosis or autophagy and may serve as 'danger' signals for recognition by innate immune receptors such as toll-like receptors (TLRs). Degrades mitochondrial CpG-rich ssDNA fragments to prevent TLR9 activation and autoinflammatory response, but it can cleave viral RNA to generate ligands for TLR7 activation and initiate antiviral immune responses. In plasmacytoid dendritic cells, it cooperates with endonuclease RNASET2 to release 2',3'-cyclic guanosine monophosphate (2',3'-cGMP), a potent stimulatory ligand for TLR7. Produces 2',3'-cGMPs and cytidine-rich RNA fragments that occupy TLR7 ligand-binding pockets and trigger a signaling-competent state. Can exert polynucleotide phosphatase activity toward 5'-phosphorylated ssDNA substrates although at a slow rate. Transphosphatidylase that catalyzes the exchange with R to S stereo-inversion of the glycerol moiety between (S,R)-lysophosphatidylglycerol (LPG) and monoacylglycerol (MAG) substrates to yield (S,S)-bis(monoacylglycero)phosphate (BMP). Can synthesize a variety of (S,S)-BMPs representing the main phospholipid constituent of lysosomal intralumenal vesicle (ILV) membranes that bind acid hydrolases for lipid degradation. Regulates the homeostasis and interorganellar communication of the endolysosomal system with an overall impact on cellular removal of dysfunctional organelles via autophagy as well as proper protein and lipid turnover. May play a role in myotube formation in response to ER stress. The sequence is that of 5'-3' exonuclease PLD4 from Mus musculus (Mouse).